The primary structure comprises 157 residues: Protein Smg homolog (157 aa).

It belongs to the Smg family.

This is Protein Smg homolog from Shewanella frigidimarina (strain NCIMB 400).